A 795-amino-acid polypeptide reads, in one-letter code: Multiple C2 domain and transmembrane region protein 12 (795 aa).

C2 domains lie at 24 to 142 (RNPR…PQWY), 180 to 298 (VCAS…SAPA), and 341 to 463 (YSSD…TCSY). Ca(2+) is bound by residues asparagine 57, aspartate 109, and asparagine 113. Transmembrane regions (helical) follow at residues 590–610 (CTPKFIALGVSFVFLFWEYYI), 612–632 (WLVTSWLVAYCIVLCIVVILL), 730–750 (FVLIILLALCYCSMLVVCLGW), and 752–772 (LHVRKCLIFVFICYWVQLPWF).

Belongs to the MCTP family. Ca(2+) serves as cofactor. Expressed in root vascular tissues and meristems. Observed in flowers.

The protein localises to the endoplasmic reticulum membrane. Its function is as follows. May function as a signaling molecule by regulating the trafficking of other regulators. This chain is Multiple C2 domain and transmembrane region protein 12, found in Arabidopsis thaliana (Mouse-ear cress).